Here is a 901-residue protein sequence, read N- to C-terminus: MSDHSAQNLEKTYNHHEVEERWRSAHWEAIGTFHAEHSRVLKEGATPYTVLMPPPNVTGSLTLGHVLNHTLQDIFIRYARMMGKEALWLPGTDHAGIATQTVVEKKLRKEGVTRHDLGRRDFLDKVWEWREEYGGLILRQLRKLGISCDWRRNLFTMDERASEAVINTFVALYREGLIYRGRRIINWCPVSQTALSDEEVIMKSRRDKLVYISYPLAKDPTRSITIATVRPETILADVAIAVNPNDERYADLIGELVIVPIAGRHVPVIADDYVDIEFGTGALKITPAHDPNDYEVAKRHNLPVFSVIGKDARMTDECGYAGMDRFDARDKIVADLAELGYLVKLEEYEHNVGYSERADVVVEPYLSEQWFVKMQPLAEPALKVVNDGEIRFHPEHWINTYRHWMENIQDWCISRQLWWGHRIPAWYDDKGNVWVASSYEEACHLAGTDKLSQDEDVLDTWFSSWLWPLTTLGWTGPHSDNDDLRAFYPTDTLVTGPDIIFFWVARMIMAGLHFKGDVPFRDVYFTSIIRDMKGRKLSKSLGNSPDPLKVIDTYGTDALRFTIVYIAPLGQDVLFGEEKCELGRNFATKIWNASRFVFMQREKLFATREEFVEAFANFTPQRELMSSAGRWLMSRYNAMLERYHQAMANFKVNDMVKIVHEFFWGDYCDWYVEALKSELTGDITEERGRHAVCLAVSVLEGVLKALHPVMPFITDEIWHAIAPRSAEETIATEAMPQPDASWRGEDAAAFDLVRNMVSEIRSLRSAFNVPHDLRAQAVIRASSPAALVALQTGRAIFPAMTKCEVELGESVERPAHSAASVVDGNELFIKLEGLISFEKEKQRLEKEITKVTAYIESLEKKLSNEKFVSNAPADVVAKEKEKLEESRSMVLKLQGNLEVLS.

Residues 536-540 (KLSKS) carry the 'KMSKS' region motif. Lysine 539 contacts ATP. The stretch at 831-901 (LEGLISFEKE…KLQGNLEVLS (71 aa)) forms a coiled coil.

This sequence belongs to the class-I aminoacyl-tRNA synthetase family. ValS type 1 subfamily. As to quaternary structure, monomer.

It is found in the cytoplasm. It catalyses the reaction tRNA(Val) + L-valine + ATP = L-valyl-tRNA(Val) + AMP + diphosphate. Catalyzes the attachment of valine to tRNA(Val). As ValRS can inadvertently accommodate and process structurally similar amino acids such as threonine, to avoid such errors, it has a 'posttransfer' editing activity that hydrolyzes mischarged Thr-tRNA(Val) in a tRNA-dependent manner. The sequence is that of Valine--tRNA ligase from Chlorobaculum tepidum (strain ATCC 49652 / DSM 12025 / NBRC 103806 / TLS) (Chlorobium tepidum).